We begin with the raw amino-acid sequence, 36 residues long: Protein YmgL (36 aa).

The sequence is that of Protein YmgL from Escherichia coli (strain K12).